The primary structure comprises 254 residues: 3-deoxy-manno-octulosonate cytidylyltransferase (254 aa).

It belongs to the KdsB family.

Its subcellular location is the cytoplasm. The catalysed reaction is 3-deoxy-alpha-D-manno-oct-2-ulosonate + CTP = CMP-3-deoxy-beta-D-manno-octulosonate + diphosphate. Its pathway is nucleotide-sugar biosynthesis; CMP-3-deoxy-D-manno-octulosonate biosynthesis; CMP-3-deoxy-D-manno-octulosonate from 3-deoxy-D-manno-octulosonate and CTP: step 1/1. It functions in the pathway bacterial outer membrane biogenesis; lipopolysaccharide biosynthesis. In terms of biological role, activates KDO (a required 8-carbon sugar) for incorporation into bacterial lipopolysaccharide in Gram-negative bacteria. The sequence is that of 3-deoxy-manno-octulosonate cytidylyltransferase from Pseudomonas entomophila (strain L48).